Consider the following 281-residue polypeptide: MALRFFNDISRDVNGLFNRDFFHTNPLSLNISTTTENGVNFTLKAKQGVTEGPIQTSVEGRFYDRKEGVSLSQSWSNQNRLNTRIEFSKIAPGWKGDVNAFLTPQSIKNAKFNLSYAQKSFAARTSIDILQPKDFVGSVTLGHRGFVGGTDIAYDTAAGLCARYAMSIGYLAREYSFILSTNNRQCATASFFQNVNRYLQVGTKATLQSKTSSNMNIEFVTRYVPDSISQVKAKIADSGLTTLSYKRNLNKDISLGVGMSFNALQLTEPVHKFGWSLSFSP.

2 residues coordinate ATP: Arg11 and Arg19.

Belongs to the eukaryotic mitochondrial porin family.

The protein resides in the mitochondrion outer membrane. Non-selective voltage-gated ion channel that mediates the transport of anions and cations through the mitochondrion outer membrane. The channel adopts an open conformation at low or zero membrane potential and a closed conformation at potentials above 30-40 mV. The open state has a weak anion selectivity whereas the closed state is cation-selective. Does not confer permeability to NADH. Functionally, catalyzes the scrambling of phospholipids across the outer mitochondrial membrane; the mechanism is unrelated to channel activity and is capable of translocating both anionic and zwitterionic phospholipids. The polypeptide is Non-selective voltage-gated ion channel 2 (POR2) (Saccharomyces cerevisiae (strain ATCC 204508 / S288c) (Baker's yeast)).